The chain runs to 370 residues: Biotin synthase (370 aa).

Positions 50–276 constitute a Radical SAM core domain; the sequence is FSDGTVDACS…IAVYRFLHPE (227 aa). The [4Fe-4S] cluster site is built by cysteine 68, cysteine 72, and cysteine 75. [2Fe-2S] cluster-binding residues include cysteine 208 and arginine 280. The interval 328–370 is disordered; it reads AGLEPNREANTFDPESVKARHRSPAAETASNANRTNATTETDD. Positions 352-370 are enriched in low complexity; it reads AAETASNANRTNATTETDD.

This sequence belongs to the radical SAM superfamily. Biotin synthase family. As to quaternary structure, homodimer. [4Fe-4S] cluster is required as a cofactor. The cofactor is [2Fe-2S] cluster.

It catalyses the reaction (4R,5S)-dethiobiotin + (sulfur carrier)-SH + 2 reduced [2Fe-2S]-[ferredoxin] + 2 S-adenosyl-L-methionine = (sulfur carrier)-H + biotin + 2 5'-deoxyadenosine + 2 L-methionine + 2 oxidized [2Fe-2S]-[ferredoxin]. It participates in cofactor biosynthesis; biotin biosynthesis; biotin from 7,8-diaminononanoate: step 2/2. In terms of biological role, catalyzes the conversion of dethiobiotin (DTB) to biotin by the insertion of a sulfur atom into dethiobiotin via a radical-based mechanism. This is Biotin synthase from Natronomonas pharaonis (strain ATCC 35678 / DSM 2160 / CIP 103997 / JCM 8858 / NBRC 14720 / NCIMB 2260 / Gabara) (Halobacterium pharaonis).